We begin with the raw amino-acid sequence, 1212 residues long: DNA-directed RNA polymerase subunit beta' (1212 aa).

Cysteine 60, cysteine 62, cysteine 75, and cysteine 78 together coordinate Zn(2+). The Mg(2+) site is built by aspartate 450, aspartate 452, and aspartate 454. Zn(2+)-binding residues include cysteine 819, cysteine 893, cysteine 900, and cysteine 903.

This sequence belongs to the RNA polymerase beta' chain family. In terms of assembly, the RNAP catalytic core consists of 2 alpha, 1 beta, 1 beta' and 1 omega subunit. When a sigma factor is associated with the core the holoenzyme is formed, which can initiate transcription. It depends on Mg(2+) as a cofactor. Requires Zn(2+) as cofactor.

It carries out the reaction RNA(n) + a ribonucleoside 5'-triphosphate = RNA(n+1) + diphosphate. Its function is as follows. DNA-dependent RNA polymerase catalyzes the transcription of DNA into RNA using the four ribonucleoside triphosphates as substrates. This Streptococcus uberis (strain ATCC BAA-854 / 0140J) protein is DNA-directed RNA polymerase subunit beta'.